Reading from the N-terminus, the 1342-residue chain is DNA-directed RNA polymerase subunit beta (1342 aa).

An N6-acetyllysine mark is found at K1022 and K1200.

Belongs to the RNA polymerase beta chain family. As to quaternary structure, the RNAP catalytic core consists of 2 alpha, 1 beta, 1 beta' and 1 omega subunit. When a sigma factor is associated with the core the holoenzyme is formed, which can initiate transcription.

The enzyme catalyses RNA(n) + a ribonucleoside 5'-triphosphate = RNA(n+1) + diphosphate. In terms of biological role, DNA-dependent RNA polymerase catalyzes the transcription of DNA into RNA using the four ribonucleoside triphosphates as substrates. The chain is DNA-directed RNA polymerase subunit beta from Escherichia fergusonii (strain ATCC 35469 / DSM 13698 / CCUG 18766 / IAM 14443 / JCM 21226 / LMG 7866 / NBRC 102419 / NCTC 12128 / CDC 0568-73).